An 86-amino-acid polypeptide reads, in one-letter code: Photosystem I reaction center subunit PsaK (86 aa).

Helical transmembrane passes span 14-34 and 57-77; these read LQWS…AIAF and FGLP…VGAV.

The protein belongs to the PsaG/PsaK family.

The protein localises to the cellular thylakoid membrane. The chain is Photosystem I reaction center subunit PsaK from Nostoc punctiforme (strain ATCC 29133 / PCC 73102).